Here is a 78-residue protein sequence, read N- to C-terminus: Large ribosomal subunit protein bL28 (78 aa).

Belongs to the bacterial ribosomal protein bL28 family.

In Corynebacterium aurimucosum (strain ATCC 700975 / DSM 44827 / CIP 107346 / CN-1) (Corynebacterium nigricans), this protein is Large ribosomal subunit protein bL28.